The sequence spans 292 residues: 4-hydroxy-tetrahydrodipicolinate synthase (292 aa).

Thr-45 serves as a coordination point for pyruvate. Tyr-133 (proton donor/acceptor) is an active-site residue. Catalysis depends on Lys-161, which acts as the Schiff-base intermediate with substrate. Ile-203 serves as a coordination point for pyruvate.

Belongs to the DapA family. As to quaternary structure, homodimer.

The protein localises to the cytoplasm. It catalyses the reaction L-aspartate 4-semialdehyde + pyruvate = (2S,4S)-4-hydroxy-2,3,4,5-tetrahydrodipicolinate + H2O + H(+). It functions in the pathway amino-acid biosynthesis; L-lysine biosynthesis via DAP pathway; (S)-tetrahydrodipicolinate from L-aspartate: step 3/4. Functionally, catalyzes the condensation of (S)-aspartate-beta-semialdehyde [(S)-ASA] and pyruvate to 4-hydroxy-tetrahydrodipicolinate (HTPA). The chain is 4-hydroxy-tetrahydrodipicolinate synthase from Pseudomonas aeruginosa (strain ATCC 15692 / DSM 22644 / CIP 104116 / JCM 14847 / LMG 12228 / 1C / PRS 101 / PAO1).